The sequence spans 473 residues: Photosystem II CP43 reaction center protein (473 aa).

A propeptide spanning residues 1–14 (MKTLYSLRRFYHVE) is cleaved from the precursor. At T15 the chain carries N-acetylthreonine. T15 carries the phosphothreonine modification. Transmembrane regions (helical) follow at residues 69–93 (LFEV…PHLA), 134–155 (LLGP…KDRN), 178–200 (KALY…RKIT), 255–275 (KPFA…LSYS), and 291–312 (WFNN…ASQA). E367 is a [CaMn4O5] cluster binding site. The helical transmembrane segment at 447-471 (RARAAAAGFEKGIDRDFEPVLSMTP) threads the bilayer.

The protein belongs to the PsbB/PsbC family. PsbC subfamily. PSII is composed of 1 copy each of membrane proteins PsbA, PsbB, PsbC, PsbD, PsbE, PsbF, PsbH, PsbI, PsbJ, PsbK, PsbL, PsbM, PsbT, PsbX, PsbY, PsbZ, Psb30/Ycf12, at least 3 peripheral proteins of the oxygen-evolving complex and a large number of cofactors. It forms dimeric complexes. It depends on Binds multiple chlorophylls and provides some of the ligands for the Ca-4Mn-5O cluster of the oxygen-evolving complex. It may also provide a ligand for a Cl- that is required for oxygen evolution. PSII binds additional chlorophylls, carotenoids and specific lipids. as a cofactor.

The protein localises to the plastid. It localises to the chloroplast thylakoid membrane. Its function is as follows. One of the components of the core complex of photosystem II (PSII). It binds chlorophyll and helps catalyze the primary light-induced photochemical processes of PSII. PSII is a light-driven water:plastoquinone oxidoreductase, using light energy to abstract electrons from H(2)O, generating O(2) and a proton gradient subsequently used for ATP formation. This Crucihimalaya wallichii (Rock-cress) protein is Photosystem II CP43 reaction center protein.